The chain runs to 461 residues: Epidermin leader peptide-processing serine protease EpiP (461 aa).

Residues 1–23 form the signal peptide; sequence MNKFKFFIVFLILSLVFLQNEYA. The Peptidase S8 domain maps to 121–459; it reads QWDMRKITNE…NGKLDVYKLL (339 aa). Catalysis depends on charge relay system residues D149, H194, and S402.

It belongs to the peptidase S8 family.

The protein operates within antibiotic biosynthesis; epidermin biosynthesis. In terms of biological role, protease which cleaves the matured lantibiotic from the modified prepeptide. This is Epidermin leader peptide-processing serine protease EpiP (epiP) from Staphylococcus epidermidis.